A 424-amino-acid chain; its full sequence is Protein FAM43A (424 aa).

Positions 261-297 are enriched in acidic residues; sequence QQEEELQEEEEEHLEDCLEEEEEEDGVGDGDPAEEEA. 2 disordered regions span residues 261-299 and 382-424; these read QQEE…EAEA and LLSG…PYSG. Over residues 382–394 the composition is skewed to low complexity; the sequence is LLSGESTGSESSI. Residues 405 to 418 are compositionally biased toward polar residues; sequence SPGNPSGPADSTSL.

The protein belongs to the FAM43 family.

In Mus musculus (Mouse), this protein is Protein FAM43A (Fam43a).